Consider the following 517-residue polypeptide: T-box transcription factor TBX5 (517 aa).

The segment at 1–46 is disordered; that stretch reads MADADEGFGLARTPLEPDSKDRSCDSKPESALGAPSKSPSSPQAAF. Residues 15–28 show a composition bias toward basic and acidic residues; the sequence is LEPDSKDRSCDSKP. The segment covering 34–45 has biased composition (low complexity); the sequence is APSKSPSSPQAA. A DNA-binding region (T-box) is located at residues 58 to 238; sequence LHERELWLKF…NNPFAKGFRG (181 aa). 2 disordered regions span residues 270-313 and 331-369; these read HSPF…YPLA and SSTE…SYRT. Residues 271–300 are compositionally biased toward polar residues; it reads SPFSSETRALSTSSNLGSQYQCENGVSGPS. Lysine 338 carries the post-translational modification N6-acetyllysine. Residues 357–369 are compositionally biased toward polar residues; that stretch reads YPQQQGLSTSYRT.

Monomer. Homodimer (via the T-box); binds DNA as homodimer. Interacts (via the T-box) with NKX2-5 (via the homeobox); this complex binds DNA. Interacts with GATA4. Interacts with KAT2A and KAT2B. Acetylation at Lys-338 by KAT2A and KAT2B promotes nuclear retention.

Its subcellular location is the nucleus. The protein resides in the cytoplasm. Functionally, DNA-binding protein that regulates the transcription of several genes and is involved in heart development and limb pattern formation. Binds to the core DNA motif of NPPA promoter. This is T-box transcription factor TBX5 (Tbx5) from Rattus norvegicus (Rat).